The sequence spans 347 residues: GMP reductase (347 aa).

108–131 (DDFTKTRQILAMSSALRFICVDVA) contributes to the NADP(+) binding site. Residues glycine 181 and glycine 183 each contribute to the K(+) site. The active-site Thioimidate intermediate is the cysteine 186. An NADP(+)-binding site is contributed by 216–239 (IVGDGGCTCPGDVAKAFGGGADFV).

It belongs to the IMPDH/GMPR family. GuaC type 1 subfamily. As to quaternary structure, homotetramer.

The enzyme catalyses IMP + NH4(+) + NADP(+) = GMP + NADPH + 2 H(+). Functionally, catalyzes the irreversible NADPH-dependent deamination of GMP to IMP. It functions in the conversion of nucleobase, nucleoside and nucleotide derivatives of G to A nucleotides, and in maintaining the intracellular balance of A and G nucleotides. The protein is GMP reductase of Aeromonas hydrophila subsp. hydrophila (strain ATCC 7966 / DSM 30187 / BCRC 13018 / CCUG 14551 / JCM 1027 / KCTC 2358 / NCIMB 9240 / NCTC 8049).